The sequence spans 458 residues: UDP-glycosyltransferase 76G1 (458 aa).

The Proton acceptor role is filled by histidine 25. Histidine 25 contributes to the rebaudioside A binding site. Histidine 25 provides a ligand contact to rubusoside. Residue asparagine 27 coordinates UDP. The active-site Charge relay is the aspartate 124. Residues 146-147 and histidine 155 each bind rebaudioside A; that span reads TS. Residues serine 283, 338 to 339, and 356 to 364 contribute to the UDP site; these read WV and HSGWNSTLE. Residues tryptophan 359 and 380-381 contribute to the rebaudioside A site; that span reads DQ.

The protein belongs to the UDP-glycosyltransferase family. As to quaternary structure, monomer.

The catalysed reaction is steviolbioside + UDP-alpha-D-glucose = rebaudioside B + UDP + H(+). The enzyme catalyses stevioside + UDP-alpha-D-glucose = rebaudioside A + UDP + H(+). It catalyses the reaction rebaudioside E + UDP-alpha-D-glucose = rebaudioside D + UDP + H(+). It carries out the reaction rebaudioside D + UDP-alpha-D-glucose = rebaudioside M + UDP + H(+). Its function is as follows. Involved in the biosynthesis of steviol glycosides in leaves. Converts the di-glycoside steviolbioside to the tri-glycoside rebaudioside B. Converts the tri-glycoside stevioside to the tetra-glycoside rebaudioside A. Converts the tetra-glycoside rebaudioside E to the penta-glycoside rebaudioside D. Converts the penta-glycoside rebaudioside D to the hexa-glycoside rebaudioside M. Can glucosylate rubusoside and rebaudioside A in vitro. The protein is UDP-glycosyltransferase 76G1 of Stevia rebaudiana (Stevia).